A 239-amino-acid polypeptide reads, in one-letter code: Tumor protein p53-inducible nuclear protein 1 (239 aa).

An LIR motif is present at residues 25 to 37; it reads EKEDDEWILVDFI.

In terms of assembly, interacts with p53/TP53 and HIPK2. Interacts with PRKCG, GABARAP, GABARAPL1, GABARAPL2, MAP1LC3A, MAP1LC3B and MAP1LC3C. Ubiquitously expressed with highest levels in the thymus.

The protein resides in the cytoplasm. Its subcellular location is the cytosol. It is found in the nucleus. The protein localises to the PML body. It localises to the cytoplasmic vesicle. The protein resides in the autophagosome. Antiproliferative and proapoptotic protein involved in cell stress response which acts as a dual regulator of transcription and autophagy. Acts as a positive regulator of autophagy. In response to cellular stress or activation of autophagy, relocates to autophagosomes where it interacts with autophagosome-associated proteins GABARAP, GABARAPL1/L2, MAP1LC3A/B/C and regulates autophagy. Acts as an antioxidant and plays a major role in p53/TP53-driven oxidative stress response. Possesses both a p53/TP53-independent intracellular reactive oxygen species (ROS) regulatory function and a p53/TP53-dependent transcription regulatory function. Positively regulates p53/TP53 and p73/TP73 and stimulates their capacity to induce apoptosis and regulate cell cycle. In response to double-strand DNA breaks, promotes p53/TP53 phosphorylation on 'Ser-46' and subsequent apoptosis. Acts as a tumor suppressor by inducing cell death by an autophagy and caspase-dependent mechanism. Can reduce cell migration by regulating the expression of SPARC. The protein is Tumor protein p53-inducible nuclear protein 1 (Trp53inp1) of Mus musculus (Mouse).